The primary structure comprises 214 residues: Phosphoheptose isomerase (214 aa).

The SIS domain occupies 51-209; that stretch reads IASTFEDGGK…IDLVERLLGY (159 aa). 66–68 provides a ligand contact to substrate; sequence NGG. Zn(2+) is bound by residues His-75 and Glu-79. Residues Glu-79, 110–111, 136–138, Ser-141, and Gln-189 contribute to the substrate site; these read ND and STS. Gln-189 and His-197 together coordinate Zn(2+).

This sequence belongs to the SIS family. GmhA subfamily. Zn(2+) serves as cofactor.

The protein resides in the cytoplasm. The enzyme catalyses 2 D-sedoheptulose 7-phosphate = D-glycero-alpha-D-manno-heptose 7-phosphate + D-glycero-beta-D-manno-heptose 7-phosphate. It functions in the pathway carbohydrate biosynthesis; D-glycero-D-manno-heptose 7-phosphate biosynthesis; D-glycero-alpha-D-manno-heptose 7-phosphate and D-glycero-beta-D-manno-heptose 7-phosphate from sedoheptulose 7-phosphate: step 1/1. Catalyzes the isomerization of sedoheptulose 7-phosphate in D-glycero-D-manno-heptose 7-phosphate. The chain is Phosphoheptose isomerase from Chlorobium limicola (strain DSM 245 / NBRC 103803 / 6330).